Consider the following 284-residue polypeptide: MQHKVVSIGDIKVANNLPFVLFGGMNVLESRDLAMRICEHYVTVTQKLDIPYVFKASFDKANRSSIHSYRGPGLDEGMKIFQELKETFGVKIITDVHEPSQAQPVSEVVDVIQLPAFLARQTDLVEAMAKTGAVINVKKPQFVSPGQMGNIVEKFKEGGNDQVILCDRGSNFGYDNLVVDMLGFHVMMQASEGAPVIFDVTHSLQCRDPFGAASGGRRGQVAELARAGMAVGLAGLFLEAHPDPDHARCDGPSALPLAKLEPFLAQIKAIDSLVKSFPELDTSK.

The protein belongs to the KdsA family.

The protein resides in the cytoplasm. The enzyme catalyses D-arabinose 5-phosphate + phosphoenolpyruvate + H2O = 3-deoxy-alpha-D-manno-2-octulosonate-8-phosphate + phosphate. It functions in the pathway carbohydrate biosynthesis; 3-deoxy-D-manno-octulosonate biosynthesis; 3-deoxy-D-manno-octulosonate from D-ribulose 5-phosphate: step 2/3. It participates in bacterial outer membrane biogenesis; lipopolysaccharide biosynthesis. The protein is 2-dehydro-3-deoxyphosphooctonate aldolase of Proteus mirabilis (strain HI4320).